The primary structure comprises 513 residues: Na(+)/H(+) antiporter NhaB (513 aa).

12 helical membrane passes run 23–43 (LALI…PFVA), 52–72 (IFTL…LLAI), 97–117 (LLLM…LFIF), 120–140 (LLLS…AAAF), 144–164 (FLDA…FYGI), 202–222 (LMMH…VGEP), 238–258 (FFLR…LTCL), 303–323 (AIIG…VGLI), 348–368 (TESL…AVII), 391–411 (LFYI…VGTI), 447–467 (ATPN…APLI), and 475–495 (VWMA…CVEF).

This sequence belongs to the NhaB Na(+)/H(+) (TC 2.A.34) antiporter family.

Its subcellular location is the cell inner membrane. The enzyme catalyses 2 Na(+)(in) + 3 H(+)(out) = 2 Na(+)(out) + 3 H(+)(in). In terms of biological role, na(+)/H(+) antiporter that extrudes sodium in exchange for external protons. The protein is Na(+)/H(+) antiporter NhaB of Escherichia coli O6:H1 (strain CFT073 / ATCC 700928 / UPEC).